We begin with the raw amino-acid sequence, 551 residues long: MKANHIRILLLVTIAIMFISLMGKWEQTFPADNTKQQTSATQNNSHYDNADSSTNTDVTTTDAKSSLAKETNFSKYDNAKSITINTGVFKDVKVSLLDGAIISASLKDYSISLDDKTPMSLLTDKSGSEYIAKSTIVVNKQPISVNFEDQGIKIENGKQILTLTGSADGLQITRTYTFDDTKYNISVSQNIKNTTSAPVNVIVDDSFARDFDPAGDSFSLLNAHSYTFTGVAYSTAKDSFRKESFKDISKTNGQPTVINSDGQGWVAFLQHYFVSAWIPQSTNAKIYYKNLNGDVFEAGAFTGATIAPNQSENISSILYTGPIIKANLVDLAPNLEKTLDYGMLSFFSEIIFWVMNHIHSLVGNWGLAIILVTCLIKLIFYPLSAKSYRSMAKMRMLQPRIKRLQETYKDDRQALGKKMMELYKEEKVNPLSGCLPMLIQIPIFISLYWVLLESVELRQAPFIFWIHDLSMKDPYFVLPVLMGLSMFLQQKLSPAPADPMQAKVMMFLPVIFTFLFASFPSGLVLYWLTNNLISISQQWIITRHYQATHKK.

A helical transmembrane segment spans residues 3 to 23 (ANHIRILLLVTIAIMFISLMG). A compositionally biased stretch (polar residues) spans 33–47 (NTKQQTSATQNNSHY). A disordered region spans residues 33–59 (NTKQQTSATQNNSHYDNADSSTNTDVT). The segment covering 50–59 (ADSSTNTDVT) has biased composition (low complexity). 3 consecutive transmembrane segments (helical) span residues 361-381 (LVGN…LIFY), 431-451 (LSGC…YWVL), and 504-524 (VMMF…SGLV).

It belongs to the OXA1/ALB3/YidC family. Type 1 subfamily. Interacts with the Sec translocase complex via SecD. Specifically interacts with transmembrane segments of nascent integral membrane proteins during membrane integration.

It is found in the cell inner membrane. Required for the insertion and/or proper folding and/or complex formation of integral membrane proteins into the membrane. Involved in integration of membrane proteins that insert both dependently and independently of the Sec translocase complex, as well as at least some lipoproteins. Aids folding of multispanning membrane proteins. This chain is Membrane protein insertase YidC, found in Francisella tularensis subsp. tularensis (strain SCHU S4 / Schu 4).